The sequence spans 443 residues: Exodeoxyribonuclease 7 large subunit (443 aa).

Belongs to the XseA family. As to quaternary structure, heterooligomer composed of large and small subunits.

The protein localises to the cytoplasm. It catalyses the reaction Exonucleolytic cleavage in either 5'- to 3'- or 3'- to 5'-direction to yield nucleoside 5'-phosphates.. Functionally, bidirectionally degrades single-stranded DNA into large acid-insoluble oligonucleotides, which are then degraded further into small acid-soluble oligonucleotides. The polypeptide is Exodeoxyribonuclease 7 large subunit (Stenotrophomonas maltophilia (strain R551-3)).